An 81-amino-acid polypeptide reads, in one-letter code: UPF0248 protein TK0315 (81 aa).

This sequence belongs to the UPF0248 family.

In Thermococcus kodakarensis (strain ATCC BAA-918 / JCM 12380 / KOD1) (Pyrococcus kodakaraensis (strain KOD1)), this protein is UPF0248 protein TK0315.